Consider the following 198-residue polypeptide: MTTKYQAPLAAGWLIRAPSLLSPTQRHWLFRPGALTAGLRQLGKVQLRVVSEHAEGASLDEARAMLIAPGSPVWVREVLMSVDGIDSVPARSLTPLAASHGSWQGMRRLLTRPLADMLYHDRGVTRSPFVCRRLSSPLPFYRMALPPNHDGSAIWARRSVFWRHGQPLLVAECFLPDFWRKVTLGRAIPPLKAHDRRA.

Residues arginine 76, leucine 114, and glutamate 172 each contribute to the substrate site.

It belongs to the UbiC family.

The protein resides in the cytoplasm. The catalysed reaction is chorismate = 4-hydroxybenzoate + pyruvate. It participates in cofactor biosynthesis; ubiquinone biosynthesis. In terms of biological role, removes the pyruvyl group from chorismate, with concomitant aromatization of the ring, to provide 4-hydroxybenzoate (4HB) for the ubiquinone pathway. The polypeptide is Probable chorismate pyruvate-lyase (Bordetella avium (strain 197N)).